A 208-amino-acid chain; its full sequence is Microtubule-associated protein Jupiter (208 aa).

Disordered regions lie at residues 24–43 (RPPG…QTPR) and 82–106 (RGQK…PGKN). Phosphoserine is present on S30. Residue T41 is modified to Phosphothreonine. The segment covering 82–93 (RGQKTVDSHSRL) has biased composition (basic and acidic residues). Phosphothreonine occurs at positions 98 and 102. 3 positions are modified to phosphoserine: S111, S139, and S150. A disordered region spans residues 132–208 (HYNGKSGSVS…PPGGYSSGLW (77 aa)). Positions 137-150 (SGSVSSASSSVSSS) are enriched in low complexity. Polar residues-rich tracts occupy residues 151–165 (TENL…SEGN) and 178–189 (EYSQRQESSNGG).

It belongs to the MAP Jupiter family. In terms of tissue distribution, ubiquitous expression throughout development. Expressed during cell division in the syncytial embryo. Expressed in developing photoreceptors of the eye imaginal disk of the third larval stage. In adults, highly expressed in neurons of the brain, concentrated in axons. In the adult ovaries, expression accumulates in the germarium and the polar follicular cells as well as in the oocyte along the microtubule network.

The protein localises to the nucleus. The protein resides in the cytoplasm. It is found in the cytoskeleton. Its subcellular location is the spindle. Functionally, binds to all microtubule populations. This chain is Microtubule-associated protein Jupiter, found in Drosophila melanogaster (Fruit fly).